The following is a 170-amino-acid chain: Shikimate kinase (170 aa).

Residue 11–16 coordinates ATP; sequence LSGKST. Ser-15 provides a ligand contact to Mg(2+). Residues Asp-33, Arg-57, and Gly-79 each contribute to the substrate site. Arg-119 lines the ATP pocket. Arg-137 provides a ligand contact to substrate.

It belongs to the shikimate kinase family. Monomer. Mg(2+) is required as a cofactor.

The protein resides in the cytoplasm. It catalyses the reaction shikimate + ATP = 3-phosphoshikimate + ADP + H(+). Its pathway is metabolic intermediate biosynthesis; chorismate biosynthesis; chorismate from D-erythrose 4-phosphate and phosphoenolpyruvate: step 5/7. Functionally, catalyzes the specific phosphorylation of the 3-hydroxyl group of shikimic acid using ATP as a cosubstrate. The sequence is that of Shikimate kinase from Clostridium botulinum (strain 657 / Type Ba4).